The chain runs to 377 residues: Glutamate 5-kinase (377 aa).

Lysine 20 contacts ATP. Positions 60, 147, and 159 each coordinate substrate. Residue 179–180 (TD) participates in ATP binding. The PUA domain maps to 285 to 363 (AGRLVIDDGA…DKVYQVLGEA (79 aa)).

It belongs to the glutamate 5-kinase family.

The protein localises to the cytoplasm. The enzyme catalyses L-glutamate + ATP = L-glutamyl 5-phosphate + ADP. Its pathway is amino-acid biosynthesis; L-proline biosynthesis; L-glutamate 5-semialdehyde from L-glutamate: step 1/2. In terms of biological role, catalyzes the transfer of a phosphate group to glutamate to form L-glutamate 5-phosphate. The polypeptide is Glutamate 5-kinase (Acinetobacter baumannii (strain SDF)).